Here is a 346-residue protein sequence, read N- to C-terminus: Methionine import ATP-binding protein MetN 1 (346 aa).

Residues Ile-2–Val-241 form the ABC transporter domain. Gly-38–Ser-45 provides a ligand contact to ATP.

Belongs to the ABC transporter superfamily. Methionine importer (TC 3.A.1.24) family. As to quaternary structure, the complex is composed of two ATP-binding proteins (MetN), two transmembrane proteins (MetI) and a solute-binding protein (MetQ).

Its subcellular location is the cell membrane. The enzyme catalyses L-methionine(out) + ATP + H2O = L-methionine(in) + ADP + phosphate + H(+). It catalyses the reaction D-methionine(out) + ATP + H2O = D-methionine(in) + ADP + phosphate + H(+). Part of the ABC transporter complex MetNIQ involved in methionine import. Responsible for energy coupling to the transport system. The sequence is that of Methionine import ATP-binding protein MetN 1 from Bacillus anthracis.